The chain runs to 714 residues: Fatty acid oxidation complex subunit alpha (714 aa).

An enoyl-CoA hydratase region spans residues 1–190 (MDMTSAFTLN…KSGLVDEIVP (190 aa)). The interval 306–714 (GTLDSIGILG…FWKTSATDRH (409 aa)) is 3-hydroxyacyl-CoA dehydrogenase.

It in the N-terminal section; belongs to the enoyl-CoA hydratase/isomerase family. The protein in the central section; belongs to the 3-hydroxyacyl-CoA dehydrogenase family. Heterotetramer of two alpha chains (FadJ) and two beta chains (FadI).

Its subcellular location is the cytoplasm. The catalysed reaction is a (3S)-3-hydroxyacyl-CoA = a (2E)-enoyl-CoA + H2O. The enzyme catalyses a 4-saturated-(3S)-3-hydroxyacyl-CoA = a (3E)-enoyl-CoA + H2O. It catalyses the reaction a (3S)-3-hydroxyacyl-CoA + NAD(+) = a 3-oxoacyl-CoA + NADH + H(+). It carries out the reaction (3S)-3-hydroxybutanoyl-CoA = (3R)-3-hydroxybutanoyl-CoA. Its pathway is lipid metabolism; fatty acid beta-oxidation. Its function is as follows. Catalyzes the formation of a hydroxyacyl-CoA by addition of water on enoyl-CoA. Also exhibits 3-hydroxyacyl-CoA epimerase and 3-hydroxyacyl-CoA dehydrogenase activities. The chain is Fatty acid oxidation complex subunit alpha from Escherichia fergusonii (strain ATCC 35469 / DSM 13698 / CCUG 18766 / IAM 14443 / JCM 21226 / LMG 7866 / NBRC 102419 / NCTC 12128 / CDC 0568-73).